A 919-amino-acid polypeptide reads, in one-letter code: WD repeat-containing protein 47 (919 aa).

In terms of domain architecture, LisH spans 10-42; that stretch reads KEVEIIKLILDFLNSKKLHISMLALEKESGVIN. Positions 45 to 102 constitute a CTLH domain; it reads FSDDMLFLRQLILDGQWDEVLQFIQPLECMEKFDKKRFRYIILKQKFLEALCVNNAMS. Residue T285 is modified to Phosphothreonine. 4 positions are modified to phosphoserine: S289, S292, S297, and S312. The interval 393 to 421 is disordered; the sequence is GQSSVSEKEPANGAQNPGPAKQEKNELRD. At S422 the chain carries Phosphoserine. The tract at residues 500–590 is disordered; it reads LNQQCNGSKG…SLSRSKGEED (91 aa). Polar residues predominate over residues 517-551; the sequence is VTSFTTPPQDSSQRLTHDASNIHTSTPRNPGSTNH. Residue T542 is modified to Phosphothreonine. WD repeat units lie at residues 604–643, 659–698, 706–748, 753–791, 798–837, 840–879, and 886–918; these read EDTQAVRAVAFHPAGGLYAVGSNSKTLRVCAYPDVIDPSA, HHKGSIYCVAWSPCGQLLATGSNDKYVKVLPFNAETCNAT, MHDG…GQGL, GHTGHILALYTWSGWMIASGSQDKTVRFWDLRVPSCVRV, GTGSAVASVAVDPSGRLLATGQEDSSCMLYDIRGGRMVQS, PHSSDVRSVRFSPGAHYLLTGSYDMKIKVTDLQGDLTKQL, and EHKDKVIQCRWHTQDLSFLSSSADRTVTLWTYN.

As to quaternary structure, interacts with MAP1S (via WD repeats).

Its subcellular location is the cytoplasm. It is found in the cytoskeleton. The polypeptide is WD repeat-containing protein 47 (WDR47) (Homo sapiens (Human)).